We begin with the raw amino-acid sequence, 847 residues long: MSSGEPLSETSSSSSSFVPVDQVHLQDAIQVIDENKHFNKDILGYINKTCPPNIGHNYHIVAVFGSQSTGKSTLLNRLFNTNFDVMNEQSRQQTTKGIWLAQSPVLSTSHGHGASKSSILVMDVEGTDGRERGEDQDFERKAALFALSTSEVLILNIWETQVGLYQGANMGLLKTVFEVNLTLFGKSKLESKNNLQSKSSHKVLLLVVIRDHVGNTPVENLASTITIDLKKMWDSLLKPTELKELAFEDFFDLDFHALNHKILQPKEFTAGVGRLGDRLVVENDIFKPEYHHNIPIDGWTLYAEKCWEQIETNKDLDLPTQQILVAQFKCDEVVDTVFKEFSNKFKELFAVIEESPDYENVGALFSDLKSEVLEDYDQVAAKYNQSVYLQKRQKLDDLVNTKLKEVFDVHAKNLLQHSLTKYKKDLVALKGKDFAARSKSLSDEALELVMLNLSHISLSGAFATEILLHQFASDIKAITSQQQFIELNNIVSKAVKKLSQSLSKLMQLQLNDPTEKTWDNILYNFHQLQKEFTSKHNGDFGLNTTEAENENAFAKFKFQSWDAFYQLIHKLITKEKVLQQLQTRFDDKFRYDVNGLPKLYQNSRELEESFAVAKEHALGVLPILTIAKLSDDSEIIPDVDIFTKLLRVKYSASNRVGNYNEEGGEEEEDEDEDEDDDVALNGFADIIDEVEKAEIMAKFRKEIDAKFMETKRSIVQHVTQIPYYIYIIILLLGWNEFMAVVRNPFTFSLAIILGASLYILYTMNLLKPALTVTQRLVDEVIAVGKEKLREVLIDDHHIQAHNLDKMTGKVKVGIHEENAKEDEDATDFLKPKPTQVDVTSLNVVEEE.

Residues 1–720 are Cytoplasmic-facing; that stretch reads MSSGEPLSET…KRSIVQHVTQ (720 aa). The region spanning 55 to 290 is the GB1/RHD3-type G domain; it reads GHNYHIVAVF…VENDIFKPEY (236 aa). 65–72 serves as a coordination point for GTP; that stretch reads GSQSTGKS. The helical transmembrane segment at 721–741 threads the bilayer; the sequence is IPYYIYIIILLLGWNEFMAVV. At 742–744 the chain is on the lumenal side; it reads RNP. The chain crosses the membrane as a helical span at residues 745 to 765; the sequence is FTFSLAIILGASLYILYTMNL. The Cytoplasmic segment spans residues 766 to 847; it reads LKPALTVTQR…VTSLNVVEEE (82 aa).

The protein belongs to the TRAFAC class dynamin-like GTPase superfamily. GB1/RHD3 GTPase family. RHD3 subfamily.

The protein resides in the endoplasmic reticulum membrane. Functionally, cooperates with the reticulon proteins and tubule-shaping DP1 family proteins to generate and maintain the structure of the tubular endoplasmic reticulum network. Has GTPase activity, which is required for its function in ER organization. In Lodderomyces elongisporus (strain ATCC 11503 / CBS 2605 / JCM 1781 / NBRC 1676 / NRRL YB-4239) (Yeast), this protein is Protein SEY1.